The following is a 177-amino-acid chain: Phycocyanin PC645 beta subunit (177 aa).

Y18 is a mesobiliverdin binding site. Positions 28, 35, and 39 each coordinate (2R,3E)-phycocyanobilin. Positions 50, 54, and 61 each coordinate 15,16-dihydrobiliverdin. Residues N72, R77, C82, R84, and D85 each contribute to the (2R,3E)-phycocyanobilin site. Q148 is a binding site for 15,16-dihydrobiliverdin. P154, G156, and C158 together coordinate (2R,3E)-phycocyanobilin.

The protein belongs to the phycobiliprotein family. Heterotetramer of 2 different alpha chains and 2 identical beta chains which form 2 alpha-beta heterodimers within the heterotetramer. Post-translationally, contains two phycocyanobilin chromophores, one mesobiliverdin chromophore and one 15,16-dihydrobiliverdin chromophore with binding mediated by both the alpha and beta subunits.

The protein localises to the plastid. It is found in the chloroplast thylakoid membrane. Functionally, light-harvesting photosynthetic tetrapyrrole chromophore-protein from the phycobiliprotein complex. The sequence is that of Phycocyanin PC645 beta subunit from Chroomonas sp. (strain CCMP270).